The sequence spans 165 residues: SsrA-binding protein (165 aa).

The segment covering 135-158 (QAHDKRQDMARRDAQREVTRELGR) has biased composition (basic and acidic residues). Positions 135–165 (QAHDKRQDMARRDAQREVTRELGRRVKGMTS) are disordered.

Belongs to the SmpB family.

The protein resides in the cytoplasm. Its function is as follows. Required for rescue of stalled ribosomes mediated by trans-translation. Binds to transfer-messenger RNA (tmRNA), required for stable association of tmRNA with ribosomes. tmRNA and SmpB together mimic tRNA shape, replacing the anticodon stem-loop with SmpB. tmRNA is encoded by the ssrA gene; the 2 termini fold to resemble tRNA(Ala) and it encodes a 'tag peptide', a short internal open reading frame. During trans-translation Ala-aminoacylated tmRNA acts like a tRNA, entering the A-site of stalled ribosomes, displacing the stalled mRNA. The ribosome then switches to translate the ORF on the tmRNA; the nascent peptide is terminated with the 'tag peptide' encoded by the tmRNA and targeted for degradation. The ribosome is freed to recommence translation, which seems to be the essential function of trans-translation. The protein is SsrA-binding protein of Mycolicibacterium vanbaalenii (strain DSM 7251 / JCM 13017 / BCRC 16820 / KCTC 9966 / NRRL B-24157 / PYR-1) (Mycobacterium vanbaalenii).